The chain runs to 460 residues: Phosphoglucomutase (460 aa).

The Phosphoserine intermediate role is filled by Ser103. Ser103 lines the Mg(2+) pocket. Substrate contacts are provided by residues 103–104 (SH) and Lys113. The Mg(2+) site is built by Asp239, Asp241, and Asp243. Residues 243–244 (DR), Thr303, and 322–324 (EMS) contribute to the substrate site.

This sequence belongs to the phosphohexose mutase family. The cofactor is Mg(2+).

It is found in the cytoplasm. It carries out the reaction alpha-D-glucose 1-phosphate = alpha-D-glucose 6-phosphate. Functionally, this enzyme participates in both the breakdown and synthesis of glucose. The chain is Phosphoglucomutase (pgm) from Neisseria meningitidis serogroup B (strain ATCC BAA-335 / MC58).